A 103-amino-acid chain; its full sequence is MQKQKIRIRLKAFDYKLIDQSAQEIVETAKRTGAIVKGPVPLPTRMQRFDILRSPHVNKTSRDQFEMRTHQRLMDIVDPTDKTVDALMKLDLPAGVDVEIKLQ.

It belongs to the universal ribosomal protein uS10 family. Part of the 30S ribosomal subunit.

Its function is as follows. Involved in the binding of tRNA to the ribosomes. The sequence is that of Small ribosomal subunit protein uS10 from Leptothrix cholodnii (strain ATCC 51168 / LMG 8142 / SP-6) (Leptothrix discophora (strain SP-6)).